A 355-amino-acid chain; its full sequence is S-adenosylmethionine:tRNA ribosyltransferase-isomerase (355 aa).

The protein belongs to the QueA family. In terms of assembly, monomer.

The protein resides in the cytoplasm. The enzyme catalyses 7-aminomethyl-7-carbaguanosine(34) in tRNA + S-adenosyl-L-methionine = epoxyqueuosine(34) in tRNA + adenine + L-methionine + 2 H(+). Its pathway is tRNA modification; tRNA-queuosine biosynthesis. Its function is as follows. Transfers and isomerizes the ribose moiety from AdoMet to the 7-aminomethyl group of 7-deazaguanine (preQ1-tRNA) to give epoxyqueuosine (oQ-tRNA). The polypeptide is S-adenosylmethionine:tRNA ribosyltransferase-isomerase (Pectobacterium atrosepticum (strain SCRI 1043 / ATCC BAA-672) (Erwinia carotovora subsp. atroseptica)).